The sequence spans 502 residues: Glutamate--tRNA ligase (502 aa).

Positions 9 to 19 (PSPTGFPHVGT) match the 'HIGH' region motif. The 'KMSKS' region motif lies at 250 to 254 (KLSKR). Position 253 (Lys-253) interacts with ATP.

Belongs to the class-I aminoacyl-tRNA synthetase family. Glutamate--tRNA ligase type 1 subfamily. In terms of assembly, monomer.

It is found in the cytoplasm. It catalyses the reaction tRNA(Glu) + L-glutamate + ATP = L-glutamyl-tRNA(Glu) + AMP + diphosphate. In terms of biological role, catalyzes the attachment of glutamate to tRNA(Glu) in a two-step reaction: glutamate is first activated by ATP to form Glu-AMP and then transferred to the acceptor end of tRNA(Glu). In Acinetobacter baumannii (strain SDF), this protein is Glutamate--tRNA ligase.